Consider the following 121-residue polypeptide: Large ribosomal subunit protein bL12 (121 aa).

This sequence belongs to the bacterial ribosomal protein bL12 family. Homodimer. Part of the ribosomal stalk of the 50S ribosomal subunit. Forms a multimeric L10(L12)X complex, where L10 forms an elongated spine to which 2 to 4 L12 dimers bind in a sequential fashion. Binds GTP-bound translation factors.

In terms of biological role, forms part of the ribosomal stalk which helps the ribosome interact with GTP-bound translation factors. Is thus essential for accurate translation. This Pelagibacter ubique (strain HTCC1062) protein is Large ribosomal subunit protein bL12.